The sequence spans 713 residues: Low-density lipoprotein receptor-related protein 10 (713 aa).

An N-terminal signal peptide occupies residues 1–16 (MLLATLLLLLLGGALA). Topologically, residues 17–440 (HPDRIIFPNH…WDCSYVLPRK (424 aa)) are extracellular. Cystine bridges form between cysteine 28/cysteine 57 and cysteine 80/cysteine 98. The region spanning 28 to 136 (CEDPPAVLLE…QGFLLSYSQD (109 aa)) is the CUB 1 domain. N-linked (GlcNAc...) asparagine glycosylation is present at asparagine 56. Residue asparagine 111 is glycosylated (N-linked (GlcNAc...) asparagine). In terms of domain architecture, LDL-receptor class A 1 spans 139–175 (MCLQEEFQCLNHRCVSAVQRCDGVDACGDGSDEAGCS). Intrachain disulfides connect cysteine 140/cysteine 152, cysteine 147/cysteine 165, cysteine 159/cysteine 174, and cysteine 192/cysteine 220. Residues 192–305 (CNVTLEDFYG…RGFNATYHVR (114 aa)) form the CUB 2 domain. Residues asparagine 193 and asparagine 299 are each glycosylated (N-linked (GlcNAc...) asparagine). LDL-receptor class A domains lie at 307 to 354 (YCLP…EDCP), 355 to 397 (GCPP…RRCR), and 398 to 434 (HCQP…WDCS). Cystine bridges form between cysteine 308/cysteine 331, cysteine 315/cysteine 344, cysteine 338/cysteine 353, cysteine 356/cysteine 374, cysteine 363/cysteine 387, cysteine 381/cysteine 396, cysteine 399/cysteine 411, cysteine 406/cysteine 424, and cysteine 418/cysteine 433. The helical transmembrane segment at 441-461 (VITAAVIGSLVCGLLLVIALG) threads the bilayer. The Cytoplasmic segment spans residues 462–713 (CTCKLYAIRT…AEAEDEPLLT (252 aa)). The disordered stretch occupies residues 564 to 637 (GLLPRTNTPA…SPAPTTVPEA (74 aa)). Residues 569 to 584 (TNTPARASEARSQVTP) show a composition bias toward polar residues. At threonine 596 the chain carries Phosphothreonine. Positions 621–636 (PLPSASTSPAPTTVPE) are enriched in low complexity.

It belongs to the LDLR family. In terms of tissue distribution, expressed in blood leukocyte, lung, placenta, small intestine, liver, kidney, spleen, thymus, colon, skeletal muscle and heart.

It localises to the membrane. The protein localises to the coated pit. Its function is as follows. Probable receptor, which is involved in the internalization of lipophilic molecules and/or signal transduction. May be involved in the uptake of lipoprotein APOE in liver. The sequence is that of Low-density lipoprotein receptor-related protein 10 (LRP10) from Homo sapiens (Human).